Reading from the N-terminus, the 353-residue chain is 4-hydroxy-3-methylbut-2-en-1-yl diphosphate synthase (flavodoxin) (353 aa).

Positions 263, 266, 298, and 305 each coordinate [4Fe-4S] cluster.

This sequence belongs to the IspG family. It depends on [4Fe-4S] cluster as a cofactor.

The catalysed reaction is (2E)-4-hydroxy-3-methylbut-2-enyl diphosphate + oxidized [flavodoxin] + H2O + 2 H(+) = 2-C-methyl-D-erythritol 2,4-cyclic diphosphate + reduced [flavodoxin]. The protein operates within isoprenoid biosynthesis; isopentenyl diphosphate biosynthesis via DXP pathway; isopentenyl diphosphate from 1-deoxy-D-xylulose 5-phosphate: step 5/6. In terms of biological role, converts 2C-methyl-D-erythritol 2,4-cyclodiphosphate (ME-2,4cPP) into 1-hydroxy-2-methyl-2-(E)-butenyl 4-diphosphate. The polypeptide is 4-hydroxy-3-methylbut-2-en-1-yl diphosphate synthase (flavodoxin) (Geobacter sulfurreducens (strain ATCC 51573 / DSM 12127 / PCA)).